Reading from the N-terminus, the 416-residue chain is Gamma-glutamyl phosphate reductase (416 aa).

It belongs to the gamma-glutamyl phosphate reductase family.

The protein resides in the cytoplasm. It carries out the reaction L-glutamate 5-semialdehyde + phosphate + NADP(+) = L-glutamyl 5-phosphate + NADPH + H(+). The protein operates within amino-acid biosynthesis; L-proline biosynthesis; L-glutamate 5-semialdehyde from L-glutamate: step 2/2. Its function is as follows. Catalyzes the NADPH-dependent reduction of L-glutamate 5-phosphate into L-glutamate 5-semialdehyde and phosphate. The product spontaneously undergoes cyclization to form 1-pyrroline-5-carboxylate. The sequence is that of Gamma-glutamyl phosphate reductase from Streptococcus thermophilus.